Consider the following 413-residue polypeptide: Multidrug resistance protein MdtM (413 aa).

At 1–14 (MQRIIQFFSQRATT) the chain is on the cytoplasmic side. Residues 15-35 (LFFPMALILYDFAAYLTTDLI) form a helical membrane-spanning segment. At 36-51 (QPGIINVVRDFNADVS) the chain is on the periplasmic side. Residues 52 to 72 (LAPASVSLYLAGGMALQWLLG) traverse the membrane as a helical segment. The Cytoplasmic segment spans residues 73 to 81 (PLSDRIGRR). A helical transmembrane segment spans residues 82–102 (PVLIAGALIFTLACAATLLTT). Residues 103–106 (SMTQ) are Periplasmic-facing. Residues 107 to 127 (FLVARFVQGTSICFIATVGYV) form a helical membrane-spanning segment. The Cytoplasmic portion of the chain corresponds to 128-140 (TVQEAFGQTKAIK). The helical transmembrane segment at 141 to 161 (LMAIITSIVLVAPVIGPLSGA) threads the bilayer. Topologically, residues 162-170 (ALMHFVHWK) are periplasmic. Residues 171–191 (VLFGIIAVMGLLALCGLLLAM) traverse the membrane as a helical segment. Residues 192 to 225 (PETVQRGAVPFSAVSVLRDFRNVFRNPIFLTGAA) lie on the Cytoplasmic side of the membrane. The chain crosses the membrane as a helical span at residues 226 to 246 (TLSLSYIPMMSWVAVSPVILI). The Periplasmic portion of the chain corresponds to 247–254 (DAGGMSTS). The helical transmembrane segment at 255 to 275 (QFAWAQVPVFGAVIVANMIVV) threads the bilayer. Over 276–289 (RLVKDPTRPRFIWR) the chain is Cytoplasmic. 2 consecutive transmembrane segments (helical) span residues 290–310 (AVPI…LLPH) and 311–331 (VWLW…MIFP). Residues 332-351 (TLFRFTLFSNNLPKGTVSAS) lie on the Cytoplasmic side of the membrane. Residues 352–372 (LNMVILTVMAVSVEVGRWLWF) traverse the membrane as a helical segment. Over 373-376 (HGGR) the chain is Periplasmic. Residues 377–397 (LPFHLLAAVAGVIVVFTLATL) form a helical membrane-spanning segment. At 398 to 413 (LQRVRQHEAAELAAEK) the chain is on the cytoplasmic side.

Belongs to the major facilitator superfamily.

Its subcellular location is the cell inner membrane. Functionally, proton-dependent efflux pump. Confers resistance to a broad spectrum of chemically unrelated substrates. This chain is Multidrug resistance protein MdtM (mdtM), found in Salmonella typhimurium (strain LT2 / SGSC1412 / ATCC 700720).